A 504-amino-acid polypeptide reads, in one-letter code: ATP synthase subunit alpha, chloroplastic (504 aa).

An ATP-binding site is contributed by glycine 170–threonine 177.

Belongs to the ATPase alpha/beta chains family. As to quaternary structure, F-type ATPases have 2 components, CF(1) - the catalytic core - and CF(0) - the membrane proton channel. CF(1) has five subunits: alpha(3), beta(3), gamma(1), delta(1), epsilon(1). CF(0) has four main subunits: a, b, b' and c.

The protein localises to the plastid. Its subcellular location is the chloroplast thylakoid membrane. The enzyme catalyses ATP + H2O + 4 H(+)(in) = ADP + phosphate + 5 H(+)(out). In terms of biological role, produces ATP from ADP in the presence of a proton gradient across the membrane. The alpha chain is a regulatory subunit. The sequence is that of ATP synthase subunit alpha, chloroplastic from Hordeum vulgare (Barley).